Consider the following 511-residue polypeptide: Pancreatic alpha-amylase (511 aa).

The N-terminal stretch at Met-1 to Ala-15 is a signal peptide. Pyrrolidone carboxylic acid is present on Gln-16. Disulfide bonds link Cys-43–Cys-101, Cys-85–Cys-130, and Cys-156–Cys-175. Positions 115, 173, and 182 each coordinate Ca(2+). Chloride is bound at residue Arg-210. The Nucleophile role is filled by Asp-212. His-216 is a Ca(2+) binding site. Glu-248 functions as the Proton donor in the catalytic mechanism. Asn-313 and Arg-352 together coordinate chloride. The cysteines at positions 393 and 399 are disulfide-linked. An N-linked (GlcNAc...) asparagine glycan is attached at Asn-427. A disulfide bond links Cys-465 and Cys-477.

Belongs to the glycosyl hydrolase 13 family. As to quaternary structure, binds to the sea anemone inhibitor helianthamide and magnificamide. Ca(2+) serves as cofactor. It depends on chloride as a cofactor.

The protein resides in the secreted. It localises to the extracellular space. It catalyses the reaction Endohydrolysis of (1-&gt;4)-alpha-D-glucosidic linkages in polysaccharides containing three or more (1-&gt;4)-alpha-linked D-glucose units.. This chain is Pancreatic alpha-amylase (AMY2), found in Sus scrofa (Pig).